Reading from the N-terminus, the 264-residue chain is Phosphate import ATP-binding protein PstB 1 (264 aa).

The ABC transporter domain occupies 20 to 259 (LETRDLNIFY…PKIKLTEDYI (240 aa)). 52-59 (GASGSGKS) is a binding site for ATP.

It belongs to the ABC transporter superfamily. Phosphate importer (TC 3.A.1.7) family. In terms of assembly, the complex is composed of two ATP-binding proteins (PstB), two transmembrane proteins (PstC and PstA) and a solute-binding protein (PstS).

The protein resides in the cell membrane. It catalyses the reaction phosphate(out) + ATP + H2O = ADP + 2 phosphate(in) + H(+). Its function is as follows. Part of the ABC transporter complex PstSACB involved in phosphate import. Responsible for energy coupling to the transport system. The chain is Phosphate import ATP-binding protein PstB 1 from Ligilactobacillus salivarius (strain UCC118) (Lactobacillus salivarius).